Consider the following 322-residue polypeptide: Thioredoxin reductase (322 aa).

Residues 12–15 (SGPA), 34–42 (EGAVTAGGA), Asn-51, and Val-84 each bind FAD. A disulfide bond links Cys-136 and Cys-139. His-176, Arg-182, Ile-239, and Tyr-259 together coordinate NADP(+). FAD is bound by residues Asp-279 and 286-289 (RQAI). Arg-286 contributes to the NADP(+) binding site.

It belongs to the class-II pyridine nucleotide-disulfide oxidoreductase family. Homodimer. Requires FAD as cofactor.

The protein resides in the cytoplasm. It carries out the reaction [thioredoxin]-dithiol + NADP(+) = [thioredoxin]-disulfide + NADPH + H(+). This chain is Thioredoxin reductase, found in Streptomyces coelicolor (strain ATCC BAA-471 / A3(2) / M145).